The sequence spans 290 residues: Undecaprenyl-diphosphatase 2 (290 aa).

Transmembrane regions (helical) follow at residues 104–124 (WMVI…KDLI), 128–148 (LRNL…FILA), 174–194 (CLAL…GLFL), 205–225 (SFLL…PDAF), 237–257 (QLFV…AWLL), and 268–288 (FALW…FGVL).

This sequence belongs to the UppP family.

It is found in the cell membrane. The catalysed reaction is di-trans,octa-cis-undecaprenyl diphosphate + H2O = di-trans,octa-cis-undecaprenyl phosphate + phosphate + H(+). In terms of biological role, catalyzes the dephosphorylation of undecaprenyl diphosphate (UPP). Confers resistance to bacitracin. In Corynebacterium jeikeium (strain K411), this protein is Undecaprenyl-diphosphatase 2.